A 189-amino-acid polypeptide reads, in one-letter code: Tumor protein p53-inducible protein 11 (189 aa).

Residues 1–63 (MAGKQPPPLM…FAVREPLGLR (63 aa)) are Cytoplasmic-facing. Ser-14 carries the post-translational modification Phosphoserine. The chain crosses the membrane as a helical span at residues 64–84 (VWQFLSAMLFSSVAIMALALP). Residues 85 to 108 (DQLYDAVFDGAEVTSKTPIRLYGG) lie on the Extracellular side of the membrane. A helical transmembrane segment spans residues 109–129 (ALLSISLIMWNALYTAEKVII). Residue Arg-130 is a topological domain, cytoplasmic. The helical transmembrane segment at 131 to 151 (WTLLTEACYFGVQSLVVTATL) threads the bilayer. Topologically, residues 152–155 (AETG) are extracellular. A helical membrane pass occupies residues 156 to 176 (LMSLGTVLLLASRLLFVIVSI). Topologically, residues 177–189 (YYYYQVGRKPKKV) are cytoplasmic.

It localises to the membrane. This is Tumor protein p53-inducible protein 11 (Trp53i11) from Mus musculus (Mouse).